A 306-amino-acid chain; its full sequence is IN2-2 protein (306 aa).

Tyr-64 (proton donor) is an active-site residue. His-131 contributes to the substrate binding site. Residue 210–220 (SPLGRGFFSSG) coordinates NADP(+). Positions 272-306 (LGSPPRKRRLPHTWHNKNRQLQPERGGTVCEAYTG) are disordered. The segment covering 276 to 289 (PRKRRLPHTWHNKN) has biased composition (basic residues).

The protein belongs to the aldo/keto reductase family. Aldo/keto reductase 2 subfamily. Leaves and roots.

This Zea mays (Maize) protein is IN2-2 protein (IN2-2).